The chain runs to 223 residues: Noggin (223 aa).

Residues 1–26 form the signal peptide; that stretch reads MDHSQCLVTIYAAAVLLGLRLQQGSC. The N-linked (GlcNAc...) asparagine glycan is linked to Asn-61. 4 disulfide bridges follow: Cys-146/Cys-183, Cys-169/Cys-219, Cys-175/Cys-221, and Cys-198/Cys-206.

It belongs to the noggin family. Homodimer.

The protein resides in the secreted. Inhibitor of bone morphogenetic proteins (BMP) signaling. Controls somitogenesis by sequestering the BMP-4 activity which in turn differentiates distinct subtypes of the mesoderm along the mediolateral axis. In Gallus gallus (Chicken), this protein is Noggin (NOG).